The primary structure comprises 653 residues: MNDKISKLESSILQLTEEVKQLESKQASKELEIRTLVDNAINSQNPAQERELINKLFTESLIDLKLKAEKIQTLERYRQEIITNLLVEQKQPNDTSIISAWEQLKISSFRINPNNNNNNSNNTNSSDSNQNYSSVILNGSLTEDSTSTISPDSTKNRDEEEIIRWEIDRNEISYNREAKLGSGAFGSVYKGIVRGKEVAIKKLTQTVFEENTMNEFKKEVSLMAKLRNPHLLLFMGACTAPEDLSIVTELMPKGSVHSLLRAKEDTSDFITFKRAILIARDTVLGMTWLHASNILHLDLKPANLLVDQNWVVKVADFGLSKYMKPDSKDKLLGQAGSPLYMAPEMLVNQPYDGKVDVFSFSILLWELLTKQEPYNKLYSSYPQLVEGVVNKKNRPIIPDYFPTRLKDLLARCWDHYPSRRPSFAEISKQRILETILIDGLILDSSARQFWSQYYMGKEEVPWNSFIVNFSLYCGFESNLSADDIKIKFLKLLLVPVDSDMVTIDNFGKILTWVGPLTNGREFFDKVYSICSIKGFMAATSSKNASQYLAGKKTGTYILRFSSDPGSYAISYLNKNKEIIHARVIYKQGSGYIHHGGQTHYATLDDLIKNTFKSLGIKEPFEGGPFHALTVAASSSKPFNIAGAYIPVAPSKKI.

A disordered region spans residues 112–133 (NPNNNNNNSNNTNSSDSNQNYS). A Protein kinase domain is found at 174-432 (YNREAKLGSG…FAEISKQRIL (259 aa)). Residues 180 to 188 (LGSGAFGSV) and Lys201 each bind ATP. The active-site Proton acceptor is the Asp298. An SH2 domain is found at 534-625 (GFMAATSSKN…IKEPFEGGPF (92 aa)).

This sequence belongs to the protein kinase superfamily. TKL Ser/Thr protein kinase family. SH2 domain-containing protein kinase subfamily.

The protein resides in the membrane. The catalysed reaction is L-seryl-[protein] + ATP = O-phospho-L-seryl-[protein] + ADP + H(+). It carries out the reaction L-threonyl-[protein] + ATP = O-phospho-L-threonyl-[protein] + ADP + H(+). Its function is as follows. Required for proper chemotaxis and phagocytosis; proper spatiotemporal control of F-actin levels in chemotaxing cells. Negative regulator of the PI3K (phosphatidylinositol 3 kinase) pathway. Predominantly phosphorylates serines and threonines and tyrosines at a lower level. The protein is Dual specificity protein kinase shkB (shkB) of Dictyostelium discoideum (Social amoeba).